A 76-amino-acid chain; its full sequence is Conotoxin VnMEKL-021 (76 aa).

Residues 1–19 (MQKLTILLLVAAVLMSTQA) form the signal peptide. The propeptide occupies 20-37 (LIKGGGEKRPKEKIKFLS). Cystine bridges form between Cys-51-Cys-65, Cys-58-Cys-69, and Cys-64-Cys-73.

This sequence belongs to the conotoxin O2 superfamily. As to expression, expressed by the venom duct.

It is found in the secreted. The polypeptide is Conotoxin VnMEKL-021 (Conus ventricosus (Mediterranean cone)).